A 292-amino-acid chain; its full sequence is Protease HtpX (292 aa).

The next 2 membrane-spanning stretches (helical) occupy residues 5–25 (IFLF…VMSL) and 34–54 (SGLL…SLLL). Histidine 140 provides a ligand contact to Zn(2+). Glutamate 141 is an active-site residue. Position 144 (histidine 144) interacts with Zn(2+). 2 consecutive transmembrane segments (helical) span residues 155-175 (LLQG…GGII) and 193-213 (IIVF…AMWF). Glutamate 218 contacts Zn(2+).

The protein belongs to the peptidase M48B family. Zn(2+) is required as a cofactor.

It localises to the cell inner membrane. This Xanthomonas euvesicatoria pv. vesicatoria (strain 85-10) (Xanthomonas campestris pv. vesicatoria) protein is Protease HtpX.